The following is a 213-amino-acid chain: MAQYTAPEFEELHIHMLCYRLHCDNKDNCELCKAGWEIIRKGTGHMIRDLLSKRDRRLAGSNIIGISLGEMDVFSARKIQEDNTDYNKTAGLINEIETSFPGMNFIKHVGGDLFKRCSQYTPFLKHADELYSTLKTVYNYFIRPTDNVPLDVIFNHITLCCHFSYILVTNPNSIWLLHTIHLTTDNILLINKHSGRNGEWIKWNVCAENSSRS.

This is an uncharacterized protein from Magallana gigas (Pacific oyster).